Reading from the N-terminus, the 878-residue chain is Alanine--tRNA ligase (878 aa).

Positions 564, 568, 666, and 670 each coordinate Zn(2+).

This sequence belongs to the class-II aminoacyl-tRNA synthetase family. In terms of assembly, homotetramer. Zn(2+) is required as a cofactor.

The protein resides in the cytoplasm. The enzyme catalyses tRNA(Ala) + L-alanine + ATP = L-alanyl-tRNA(Ala) + AMP + diphosphate. Catalyzes the attachment of alanine to tRNA(Ala) in a two-step reaction: alanine is first activated by ATP to form Ala-AMP and then transferred to the acceptor end of tRNA(Ala). Also edits incorrectly charged Ser-tRNA(Ala) and Gly-tRNA(Ala) via its editing domain. The chain is Alanine--tRNA ligase from Buchnera aphidicola subsp. Acyrthosiphon pisum (strain APS) (Acyrthosiphon pisum symbiotic bacterium).